The following is a 288-amino-acid chain: Acetyl-coenzyme A carboxylase carboxyl transferase subunit beta (288 aa).

In terms of domain architecture, CoA carboxyltransferase N-terminal spans 33 to 288; the sequence is LFSQCPGCKH…LVRLHGGSPR (256 aa). 4 residues coordinate Zn(2+): C37, C40, C55, and C58. The segment at 37–58 adopts a C4-type zinc-finger fold; sequence CPGCKHTIYQKDLGSERICPHC.

This sequence belongs to the AccD/PCCB family. In terms of assembly, acetyl-CoA carboxylase is a heterohexamer composed of biotin carboxyl carrier protein (AccB), biotin carboxylase (AccC) and two subunits each of ACCase subunit alpha (AccA) and ACCase subunit beta (AccD). Requires Zn(2+) as cofactor.

It localises to the cytoplasm. It catalyses the reaction N(6)-carboxybiotinyl-L-lysyl-[protein] + acetyl-CoA = N(6)-biotinyl-L-lysyl-[protein] + malonyl-CoA. It participates in lipid metabolism; malonyl-CoA biosynthesis; malonyl-CoA from acetyl-CoA: step 1/1. Component of the acetyl coenzyme A carboxylase (ACC) complex. Biotin carboxylase (BC) catalyzes the carboxylation of biotin on its carrier protein (BCCP) and then the CO(2) group is transferred by the transcarboxylase to acetyl-CoA to form malonyl-CoA. The chain is Acetyl-coenzyme A carboxylase carboxyl transferase subunit beta from Streptococcus pneumoniae serotype 4 (strain ATCC BAA-334 / TIGR4).